The following is a 394-amino-acid chain: Short-chain dehydrogenase/reductase family 42E member 1 (394 aa).

The active-site Proton acceptor is the Tyr-153. Lys-157 is a binding site for NAD(+). 2 helical membrane-spanning segments follow: residues 283-303 (LPLT…FIVG) and 367-387 (FMLW…TWIL).

Belongs to the 3-beta-HSD family.

The protein localises to the membrane. The polypeptide is Short-chain dehydrogenase/reductase family 42E member 1 (Sdr42e1) (Mus musculus (Mouse)).